A 720-amino-acid chain; its full sequence is Engulfment and cell motility protein 3 (720 aa).

Positions glutamate 307–leucine 479 constitute an ELMO domain. Positions leucine 541–glycine 663 constitute a PH domain.

Probably interacts directly with the SH3-domain of DOCK1 via its SH3-binding site. Part of a complex with DOCK1 and RAC1. Interacts with ADGRB3.

It is found in the cytoplasm. Involved in cytoskeletal rearrangements required for phagocytosis of apoptotic cells and cell motility. Acts in association with DOCK1 and CRK. Was initially proposed to be required in complex with DOCK1 to activate Rac Rho small GTPases. May enhance the guanine nucleotide exchange factor (GEF) activity of DOCK1. The polypeptide is Engulfment and cell motility protein 3 (Elmo3) (Rattus norvegicus (Rat)).